The following is a 326-amino-acid chain: MLTLARQQQRQNIRWLLCLSVLMLLALLLSLCAGEQWISPGDWSTPRGELFVWQIRLPRTLAVLLVGAALAISGAVMQALFENPLAEPGLLGVSNGAGVGLIAAVLLGQGQLPNWALGLCAIAGALIITLILLRFARRHLSTSRLLLAGVALGIICSALMTWAIYFSTSVDLRQLMYWMMGGFGGVDWRQSWLMLALIPVLLWICCQSRPMNMLALGEISARQLGLPLWFWRNVLVAATGWMVGVSVALAGAIGFIGLVIPHILRLCGLTDHRVLLPGCALAGASALLLADVVARLALAAAELPIGVVTATLGAPVFIWLLLKAGR.

9 consecutive transmembrane segments (helical) span residues 15 to 35 (WLLC…CAGE), 61 to 81 (LAVL…QALF), 88 to 108 (PGLL…VLLG), 112 to 132 (LPNW…TLIL), 146 to 166 (LLAG…AIYF), 184 to 204 (GGVD…LLWI), 240 to 260 (GWMV…GLVI), 274 to 294 (VLLP…DVVA), and 302 to 322 (ELPI…WLLL).

Belongs to the binding-protein-dependent transport system permease family. FecCD subfamily. The complex is composed of two ATP-binding proteins (BtuD), two transmembrane proteins (BtuC) and a solute-binding protein (BtuF).

The protein resides in the cell inner membrane. Its function is as follows. Part of the ABC transporter complex BtuCDF involved in vitamin B12 import. Involved in the translocation of the substrate across the membrane. The chain is Vitamin B12 import system permease protein BtuC from Escherichia coli O17:K52:H18 (strain UMN026 / ExPEC).